The sequence spans 418 residues: Gamma-glutamyl phosphate reductase (418 aa).

The protein belongs to the gamma-glutamyl phosphate reductase family.

The protein localises to the cytoplasm. The enzyme catalyses L-glutamate 5-semialdehyde + phosphate + NADP(+) = L-glutamyl 5-phosphate + NADPH + H(+). Its pathway is amino-acid biosynthesis; L-proline biosynthesis; L-glutamate 5-semialdehyde from L-glutamate: step 2/2. Its function is as follows. Catalyzes the NADPH-dependent reduction of L-glutamate 5-phosphate into L-glutamate 5-semialdehyde and phosphate. The product spontaneously undergoes cyclization to form 1-pyrroline-5-carboxylate. The protein is Gamma-glutamyl phosphate reductase of Geotalea daltonii (strain DSM 22248 / JCM 15807 / FRC-32) (Geobacter daltonii).